The sequence spans 239 residues: Peptidyl-tRNA hydrolase (239 aa).

A tRNA-binding site is contributed by Tyr14. The active-site Proton acceptor is the His19. TRNA is bound by residues Phe64, Asn66, and Asn112. The interval 188 to 239 is disordered; sequence APPRSSTSKPKAQDNREDAAQAAEERSETRTPPEARPEDTRSALQKLADKFR. Residues 198 to 239 show a composition bias toward basic and acidic residues; that stretch reads KAQDNREDAAQAAEERSETRTPPEARPEDTRSALQKLADKFR.

This sequence belongs to the PTH family. Monomer.

The protein resides in the cytoplasm. It catalyses the reaction an N-acyl-L-alpha-aminoacyl-tRNA + H2O = an N-acyl-L-amino acid + a tRNA + H(+). In terms of biological role, hydrolyzes ribosome-free peptidyl-tRNAs (with 1 or more amino acids incorporated), which drop off the ribosome during protein synthesis, or as a result of ribosome stalling. Functionally, catalyzes the release of premature peptidyl moieties from peptidyl-tRNA molecules trapped in stalled 50S ribosomal subunits, and thus maintains levels of free tRNAs and 50S ribosomes. The chain is Peptidyl-tRNA hydrolase from Jannaschia sp. (strain CCS1).